The following is a 156-amino-acid chain: MTTLNAKPDFSLFLQALSWEIDDQAGIEVRNDLLREVGRGMAGRFQPPLCNTIHQLQIELNALLAMINWGYVKLDLLAEEQAMRIVHEDLPQVGSAGEPAGTWLAPVLEGLYGRWITSQPGAFGDYVVTRDIDAEDLNSVPAQTIILYMRTRSAAT.

It functions in the pathway glycan metabolism; bacterial cellulose biosynthesis. In terms of biological role, may have a major role in the perfection of crystallization, involved either in the pore structure itself or in the organization of the pores within the linear array of terminal synthesizing complexes (TCs). This Komagataeibacter xylinus (Gluconacetobacter xylinus) protein is Cellulose synthase operon protein D.